The primary structure comprises 83 residues: Acylphosphatase (83 aa).

In terms of domain architecture, Acylphosphatase-like spans 1 to 83 (MIEGRVQRVG…TGDDWFEVRY (83 aa)). Active-site residues include Arg-12 and Asn-30.

The protein belongs to the acylphosphatase family.

It carries out the reaction an acyl phosphate + H2O = a carboxylate + phosphate + H(+). In Synechococcus sp. (strain CC9605), this protein is Acylphosphatase (acyP).